Reading from the N-terminus, the 171-residue chain is MDYFTLFGLPARYQIDTQALSLRFQDLQRQYHPDKFANGTQAQQLAAVQQSATINQAWQTLRHPLTRAEYLLSLHGFDLASEQHTVRDTAFLMEQLTLREELDDIEQSKDDVRLESFIKRVQKMFDARLQQMVEQLDNAAWDAAADTVRKLRFLDKLRSSAEQLEEKLLDF.

In terms of domain architecture, J spans 2–74; it reads DYFTLFGLPA…LTRAEYLLSL (73 aa).

This sequence belongs to the HscB family. As to quaternary structure, interacts with HscA and stimulates its ATPase activity. Interacts with IscU.

In terms of biological role, co-chaperone involved in the maturation of iron-sulfur cluster-containing proteins. Seems to help targeting proteins to be folded toward HscA. The chain is Co-chaperone protein HscB from Salmonella schwarzengrund (strain CVM19633).